The sequence spans 161 residues: D-amino-acid N-acetyltransferase HPA3 (161 aa).

At Ser-2 the chain carries N-acetylserine. The N-acetyltransferase domain occupies 14 to 161 (IVVKAIEPKD…DKVLYKRNGY (148 aa)). 98–111 (LYVTERARVKGVGR) serves as a coordination point for acetyl-CoA.

It belongs to the acetyltransferase family. GNAT subfamily. Post-translationally, autoacetylates in an intermolecular reaction.

It localises to the cytoplasm. It is found in the nucleus. It catalyses the reaction a D-alpha-amino acid + acetyl-CoA = an N-acetyl-D-amino acid + CoA + H(+). In terms of biological role, N-acetyltransferase that acts on a wide range of D-amino acids. Catalyzes the N-acetylation through an ordered bi-bi mechanism, in which acetyl-CoA is the first substrate to be bound and CoA is the last product to be liberated. D-amino acids are toxic for the cell and their N-acetylation, preceding removal from cells, plays an important role in detoxification of D-amino acids. In vitro, capable of acetylating histone H4 at 'Lys-8' and polyamines like putrescine, spermidine and spermine. The protein is D-amino-acid N-acetyltransferase HPA3 of Saccharomyces cerevisiae (strain ATCC 204508 / S288c) (Baker's yeast).